We begin with the raw amino-acid sequence, 925 residues long: Aspulvinone E synthetase melA (925 aa).

Residues 11 to 434 form an adenylation (A) domain region; sequence ETAAARNGDG…GGRAKETIII (424 aa). In terms of domain architecture, Carrier spans 564-644; sequence SPKNDFEKGL…ELAAALDNLY (81 aa). The residue at position 601 (serine 601) is an O-(pantetheine 4'-phosphoryl)serine. The thioesterase (TE) domain stretch occupies residues 663–923; sequence PLWLVHPGAG…KILRSALAER (261 aa).

The protein belongs to the NRP synthetase family.

It localises to the cytoplasm. The enzyme catalyses 2 3-(4-hydroxyphenyl)pyruvate + AH2 + 2 ATP + O2 = aspulvinone E + A + 2 AMP + CO2 + 2 diphosphate + H2O + H(+). In terms of biological role, nonribosomal peptide synthase; part of the gene cluster that mediates the biosynthesis of Asp-melanin, a pigment that confers resistance against UV light and hampers phagocytosis by soil amoeba. The nonribosomal peptide synthase melA converts 4-hydroxyphenylpyruvate (4-HPPA) to aspulvinone E. The tyrosinase tyrP then performs hydroxylations of both aromatic moieties of aspulvinone E. The product of tyrP is highly unstable, and, due to the high reactivity of methides and ortho-diquinones, the polymeric Asp-melanin forms spontaneously. This Aspergillus terreus (strain NIH 2624 / FGSC A1156) protein is Aspulvinone E synthetase melA.